The chain runs to 407 residues: Enolase-binding protein (407 aa).

Positions 1–24 are cleaved as a signal peptide; sequence MALGNALYPLTATVFLCVVGFATS. Residues 25-366 are Extracellular-facing; it reads SNENSRFLIN…FGQAYPGFRN (342 aa). N-linked (GlcNAc...) asparagine glycans are attached at residues Asn-52, Asn-78, Asn-161, and Asn-250. Residues 367–387 traverse the membrane as a helical segment; it reads VAIGAAILFFSVLGVAIIDMI. Over 388–407 the chain is Cytoplasmic; the sequence is RRTIANRRAKRLHLGKYSRT.

(Microbial infection) Interacts with ENO/enolase from parasites P.berghei and P.falciparum. In terms of tissue distribution, expressed in the female midgut epithelium.

Its subcellular location is the cell membrane. (Microbial infection) Acts as a receptor for ENO/enolase from parasites P.berghei and P.falciparum. The interaction is involved in the invasion of the mosquito midgut by P.berghei ookinete, but is dispensable for P.falciparum ookinete invasion. The sequence is that of Enolase-binding protein from Anopheles gambiae (African malaria mosquito).